The chain runs to 20 residues: Insulin-like growth factor-binding protein 2 (20 aa).

The 19-residue stretch at 2–20 (LVFYCPKCTAERQTACPKL) folds into the IGFBP N-terminal domain.

Binds IGF2 more than IGF1. Post-translationally, N-glycosylated.

Its subcellular location is the secreted. In terms of biological role, inhibits IGF-mediated growth and developmental rates. IGF-binding proteins prolong the half-life of the IGFs and have been shown to either inhibit or stimulate the growth promoting effects of the IGFs on cell culture. They alter the interaction of IGFs with their cell surface receptors. The protein is Insulin-like growth factor-binding protein 2 (igfbp2) of Oncorhynchus tshawytscha (Chinook salmon).